The following is a 179-amino-acid chain: Adenine phosphoribosyltransferase (179 aa).

Belongs to the purine/pyrimidine phosphoribosyltransferase family. As to quaternary structure, homodimer.

The protein resides in the cytoplasm. The catalysed reaction is AMP + diphosphate = 5-phospho-alpha-D-ribose 1-diphosphate + adenine. Its pathway is purine metabolism; AMP biosynthesis via salvage pathway; AMP from adenine: step 1/1. In terms of biological role, catalyzes a salvage reaction resulting in the formation of AMP, that is energically less costly than de novo synthesis. The polypeptide is Adenine phosphoribosyltransferase (Helicobacter pylori (strain ATCC 700392 / 26695) (Campylobacter pylori)).